The primary structure comprises 126 residues: Protein C10 (126 aa).

A2 carries the post-translational modification N-acetylalanine.

This sequence belongs to the UPF0456 family. As to expression, ubiquitously expressed, with higher expression in lung and fetal brain.

It is found in the cytoplasm. In brain, may be required for corpus callosum development. The chain is Protein C10 (C12orf57) from Homo sapiens (Human).